Here is a 213-residue protein sequence, read N- to C-terminus: Ras-related protein RabK1 (213 aa).

Gly14–Leu21 is a binding site for GTP. The short motif at Gly36–Phe43 is the Effector region element. Residues Asn61–Ser65 and Thr119–Asp122 each bind GTP.

Belongs to the small GTPase superfamily. Rab family.

The polypeptide is Ras-related protein RabK1 (rabK1) (Dictyostelium discoideum (Social amoeba)).